Here is a 109-residue protein sequence, read N- to C-terminus: Aquaporin-2 (109 aa).

Residues 1–6 are Cytoplasmic-facing; it reads SIAFSR. Residues 7 to 27 traverse the membrane as a helical segment; sequence AVLAEFLATLLFVFFGLGSAL. Residues 28 to 35 are Extracellular-facing; that stretch reads NWPQAMPS. Residues 36 to 54 traverse the membrane as a helical segment; the sequence is VLQIAMAFGLAIGTLVQAL. The Cytoplasmic segment spans residues 55–59; sequence GHVSG. An intramembrane region (discontinuously helical) is located at residues 60 to 69; it reads AHINPAVTVA. Residues 63–65 carry the NPA 1 motif; sequence NPA. Topologically, residues 70 to 80 are cytoplasmic; it reads CLVGCHVSFLR. A helical membrane pass occupies residues 81-102; it reads AAFYVAAQLLGAVAGAALLHEI. The Extracellular segment spans residues 103-109; that stretch reads TPPDIRR.

It belongs to the MIP/aquaporin (TC 1.A.8) family. As to quaternary structure, homotetramer. Serine phosphorylation is necessary and sufficient for expression at the apical membrane. Endocytosis is not phosphorylation-dependent. Post-translationally, N-glycosylated.

The protein resides in the apical cell membrane. It localises to the basolateral cell membrane. Its subcellular location is the cell membrane. It is found in the cytoplasmic vesicle membrane. The protein localises to the golgi apparatus. The protein resides in the trans-Golgi network membrane. The enzyme catalyses H2O(in) = H2O(out). It carries out the reaction glycerol(in) = glycerol(out). In terms of biological role, forms a water-specific channel that provides the plasma membranes of renal collecting duct with high permeability to water, thereby permitting water to move in the direction of an osmotic gradient. Plays an essential role in renal water homeostasis. Could also be permeable to glycerol. This chain is Aquaporin-2, found in Equus caballus (Horse).